The chain runs to 217 residues: MRLILLGPPGAGKGTQANFIKEKFGIPQISTGDMLRAAVKAGTPLGIEAKKVMDAGGLVSDEIIIGLVKDRLQQDDCKAGYMFDGFPRTIPQADAMKDAGVPIDFVLEIDVPDSEIVERMSGRRAHLASGRTYHVKYNPPKVEGKDDVTGEDLVQRDDDKEETVKKRLDVYHAQTKPLVEYYSSWAASGDAKAPKVRKISGLGAVDEITARAFDALK.

10 to 15 (GAGKGT) is an ATP binding site. An NMP region spans residues 30–59 (STGDMLRAAVKAGTPLGIEAKKVMDAGGLV). AMP contacts are provided by residues T31, R36, 57–59 (GLV), 85–88 (GFPR), and Q92. Residues 122 to 159 (GRRAHLASGRTYHVKYNPPKVEGKDDVTGEDLVQRDDD) form an LID region. ATP contacts are provided by residues R123 and 132-133 (TY). Residues R156 and R167 each contribute to the AMP site. G203 is a binding site for ATP.

Belongs to the adenylate kinase family. As to quaternary structure, monomer.

The protein resides in the cytoplasm. It carries out the reaction AMP + ATP = 2 ADP. The protein operates within purine metabolism; AMP biosynthesis via salvage pathway; AMP from ADP: step 1/1. Functionally, catalyzes the reversible transfer of the terminal phosphate group between ATP and AMP. Plays an important role in cellular energy homeostasis and in adenine nucleotide metabolism. This is Adenylate kinase from Azoarcus sp. (strain BH72).